A 268-amino-acid chain; its full sequence is Large ribosomal subunit protein bL9m (268 aa).

A mitochondrion-targeting transit peptide spans 1 to 52 (MAAAAFAVPRGVQLRVLTERLLRGGVRELLRPRLSGSTPGSERDFSLSHSRG).

This sequence belongs to the bacterial ribosomal protein bL9 family. In terms of assembly, component of the mitochondrial ribosome large subunit (39S) which comprises a 16S rRNA and about 50 distinct proteins.

It is found in the mitochondrion. The polypeptide is Large ribosomal subunit protein bL9m (MRPL9) (Bos taurus (Bovine)).